Reading from the N-terminus, the 284-residue chain is Undecaprenyl-diphosphatase (284 aa).

8 consecutive transmembrane segments (helical) span residues 7–27 (IILGIIEGITEWLPISSTGHL), 44–64 (EMFDVVIQLGAILSVVVLYFH), 90–110 (LWLKVLIAALPAAIIGLPLND), 116–136 (FYHFVPVAFMLIIYGVAFIVI), 167–187 (VLSLLPGTSRSGATIVGALLI), 197–217 (FTFFLGIPVMFGASFIKILHF), 229–249 (FGVLLVACLVAFGVSMIAIKF), and 259–279 (FTFFGKYRIVLGIVLLIYAAF).

The protein belongs to the UppP family.

The protein localises to the cell membrane. It catalyses the reaction di-trans,octa-cis-undecaprenyl diphosphate + H2O = di-trans,octa-cis-undecaprenyl phosphate + phosphate + H(+). Its function is as follows. Catalyzes the dephosphorylation of undecaprenyl diphosphate (UPP). Confers resistance to bacitracin. The protein is Undecaprenyl-diphosphatase of Lactococcus lactis subsp. cremoris (strain SK11).